The sequence spans 234 residues: Phosphoglycolate phosphatase (234 aa).

The active-site Nucleophile is the aspartate 9. Aspartate 9 and aspartate 11 together coordinate Mg(2+). Lysine 162 provides a ligand contact to substrate. The Mg(2+) site is built by aspartate 185 and aspartate 189.

This sequence belongs to the archaeal SPP-like hydrolase family. Mg(2+) is required as a cofactor.

It carries out the reaction 2-phosphoglycolate + H2O = glycolate + phosphate. Catalyzes the dephosphorylation of 2-phosphoglycolate. The chain is Phosphoglycolate phosphatase from Methanobrevibacter smithii (strain ATCC 35061 / DSM 861 / OCM 144 / PS).